Here is a 1235-residue protein sequence, read N- to C-terminus: Ubiquitin carboxyl-terminal hydrolase 40 (1235 aa).

The region spanning 41-482 is the USP domain; that stretch reads SGIRNQGGTC…SAYMLFYRKA (442 aa). Residue cysteine 50 is the Nucleophile of the active site. Histidine 305 functions as the Proton acceptor in the catalytic mechanism.

It belongs to the peptidase C19 family.

The enzyme catalyses Thiol-dependent hydrolysis of ester, thioester, amide, peptide and isopeptide bonds formed by the C-terminal Gly of ubiquitin (a 76-residue protein attached to proteins as an intracellular targeting signal).. In Mus musculus (Mouse), this protein is Ubiquitin carboxyl-terminal hydrolase 40 (Usp40).